Reading from the N-terminus, the 276-residue chain is Diaminopimelate epimerase (276 aa).

3 residues coordinate substrate: N13, Q46, and N66. Catalysis depends on C75, which acts as the Proton donor. Substrate contacts are provided by residues 76–77 (GN), N159, N192, and 210–211 (ER). Residue C219 is the Proton acceptor of the active site. A substrate-binding site is contributed by 220 to 221 (GS).

This sequence belongs to the diaminopimelate epimerase family. Homodimer.

The protein localises to the cytoplasm. The catalysed reaction is (2S,6S)-2,6-diaminopimelate = meso-2,6-diaminopimelate. It functions in the pathway amino-acid biosynthesis; L-lysine biosynthesis via DAP pathway; DL-2,6-diaminopimelate from LL-2,6-diaminopimelate: step 1/1. Its function is as follows. Catalyzes the stereoinversion of LL-2,6-diaminopimelate (L,L-DAP) to meso-diaminopimelate (meso-DAP), a precursor of L-lysine and an essential component of the bacterial peptidoglycan. The chain is Diaminopimelate epimerase from Vibrio campbellii (strain ATCC BAA-1116).